Reading from the N-terminus, the 578-residue chain is Zinc finger protein with KRAB and SCAN domains 8 (578 aa).

The segment at 1-20 (MAEESRKPSAPSPPDQTPEE) is disordered. At Ser12 the chain carries Phosphoserine. A Glycyl lysine isopeptide (Lys-Gly) (interchain with G-Cter in SUMO2) cross-link involves residue Lys26. The region spanning 51–133 (RLRFRQLCYQ…TLLEDLERQI (83 aa)) is the SCAN box domain. Residues 158 to 205 (ASAPEPPNTQLQSEATQHKSPVPQESQERSMSTSQSPTRSQKGSSGDQ) form a disordered region. Over residues 165–205 (NTQLQSEATQHKSPVPQESQERSMSTSQSPTRSQKGSSGDQ) the composition is skewed to polar residues. Residues Lys176 and Lys199 each participate in a glycyl lysine isopeptide (Lys-Gly) (interchain with G-Cter in SUMO2) cross-link. The residue at position 201 (Ser201) is a Phosphoserine. One can recognise a KRAB domain in the interval 220-316 (EKIEDMAVSL…GRLERQRGNP (97 aa)). Glycyl lysine isopeptide (Lys-Gly) (interchain with G-Cter in SUMO2) cross-links involve residues Lys221, Lys272, and Lys288. 2 consecutive C2H2-type zinc fingers follow at residues 322-344 (HKCD…WRIH) and 350-372 (YQCN…QDIH). Residues Lys374 and Lys376 each participate in a glycyl lysine isopeptide (Lys-Gly) (interchain with G-Cter in SUMO2) cross-link. 7 consecutive C2H2-type zinc fingers follow at residues 378-400 (YHCK…QRIH), 406-428 (YQCN…QRIH), 434-456 (YECN…QRIH), 462-484 (YECD…QRSH), 490-512 (YKCN…QRIH), 518-540 (YKCK…LRIH), and 546-568 (YQCN…QRIH). Glycyl lysine isopeptide (Lys-Gly) (interchain with G-Cter in SUMO2) cross-links involve residues Lys413 and Lys441. A Glycyl lysine isopeptide (Lys-Gly) (interchain with G-Cter in SUMO2) cross-link involves residue Lys502. Residue Lys572 forms a Glycyl lysine isopeptide (Lys-Gly) (interchain with G-Cter in SUMO2) linkage.

Belongs to the krueppel C2H2-type zinc-finger protein family.

It localises to the nucleus. Its function is as follows. May be involved in transcriptional regulation. The sequence is that of Zinc finger protein with KRAB and SCAN domains 8 (ZKSCAN8) from Pan paniscus (Pygmy chimpanzee).